Here is a 453-residue protein sequence, read N- to C-terminus: Bifunctional protein GlmU (453 aa).

The segment at 1-225 (MNIVILAAGT…EWETLGVNSK (225 aa)) is pyrophosphorylase. UDP-N-acetyl-alpha-D-glucosamine-binding positions include 6-9 (LAAG), K20, Q71, 76-77 (GT), 98-100 (YGD), G135, E150, N165, and N223. D100 contributes to the Mg(2+) binding site. Mg(2+) is bound at residue N223. Residues 226–246 (AQLAELERIHQRNVADALLVD) form a linker region. The segment at 247-453 (GVTLADPARV…GYVRPVKKKS (207 aa)) is N-acetyltransferase. Residues R329 and K347 each contribute to the UDP-N-acetyl-alpha-D-glucosamine site. H359 functions as the Proton acceptor in the catalytic mechanism. 2 residues coordinate UDP-N-acetyl-alpha-D-glucosamine: Y362 and N373. Residues A376, 382–383 (NY), S401, and A419 contribute to the acetyl-CoA site.

The protein in the N-terminal section; belongs to the N-acetylglucosamine-1-phosphate uridyltransferase family. This sequence in the C-terminal section; belongs to the transferase hexapeptide repeat family. Homotrimer. The cofactor is Mg(2+).

The protein localises to the cytoplasm. The catalysed reaction is alpha-D-glucosamine 1-phosphate + acetyl-CoA = N-acetyl-alpha-D-glucosamine 1-phosphate + CoA + H(+). It carries out the reaction N-acetyl-alpha-D-glucosamine 1-phosphate + UTP + H(+) = UDP-N-acetyl-alpha-D-glucosamine + diphosphate. The protein operates within nucleotide-sugar biosynthesis; UDP-N-acetyl-alpha-D-glucosamine biosynthesis; N-acetyl-alpha-D-glucosamine 1-phosphate from alpha-D-glucosamine 6-phosphate (route II): step 2/2. It participates in nucleotide-sugar biosynthesis; UDP-N-acetyl-alpha-D-glucosamine biosynthesis; UDP-N-acetyl-alpha-D-glucosamine from N-acetyl-alpha-D-glucosamine 1-phosphate: step 1/1. It functions in the pathway bacterial outer membrane biogenesis; LPS lipid A biosynthesis. Functionally, catalyzes the last two sequential reactions in the de novo biosynthetic pathway for UDP-N-acetylglucosamine (UDP-GlcNAc). The C-terminal domain catalyzes the transfer of acetyl group from acetyl coenzyme A to glucosamine-1-phosphate (GlcN-1-P) to produce N-acetylglucosamine-1-phosphate (GlcNAc-1-P), which is converted into UDP-GlcNAc by the transfer of uridine 5-monophosphate (from uridine 5-triphosphate), a reaction catalyzed by the N-terminal domain. The polypeptide is Bifunctional protein GlmU (Burkholderia orbicola (strain MC0-3)).